The following is an 865-amino-acid chain: cGMP-specific 3',5'-cyclic phosphodiesterase (865 aa).

Ser-92 carries the post-translational modification Phosphoserine. GAF domains follow at residues 154-304 and 336-493; these read DVTA…GIVL and SLEV…GLGI. The PDEase domain occupies 526-850; sequence ETRELQSLAA…QKWQALAEQQ (325 aa). The Proton donor role is filled by His-603. His-607, His-643, Asp-644, and Asp-754 together coordinate Zn(2+). Residue Asp-644 coordinates Mg(2+). Gln-807 lines the 3',5'-cyclic GMP pocket.

The protein belongs to the cyclic nucleotide phosphodiesterase family. Zn(2+) is required as a cofactor. Requires Mg(2+) as cofactor. In terms of processing, phosphorylation is regulated by binding of cGMP to the two allosteric sites. Phosphorylation by PRKG1 leads to its activation.

The enzyme catalyses 3',5'-cyclic GMP + H2O = GMP + H(+). The protein operates within purine metabolism; 3',5'-cyclic GMP degradation; GMP from 3',5'-cyclic GMP: step 1/1. Most potently inhibited by zaprinast and dipyridamole. Functionally, plays a role in signal transduction by regulating the intracellular concentration of cyclic nucleotides. This phosphodiesterase catalyzes the specific hydrolysis of cGMP to 5'-GMP. Specifically regulates nitric-oxide-generated cGMP. The protein is cGMP-specific 3',5'-cyclic phosphodiesterase (PDE5A) of Bos taurus (Bovine).